The sequence spans 204 residues: Urease accessory protein UreG 1 (204 aa).

A GTP-binding site is contributed by 14–21 (GPVGSGKT).

It belongs to the SIMIBI class G3E GTPase family. UreG subfamily. As to quaternary structure, homodimer. UreD, UreF and UreG form a complex that acts as a GTP-hydrolysis-dependent molecular chaperone, activating the urease apoprotein by helping to assemble the nickel containing metallocenter of UreC. The UreE protein probably delivers the nickel.

The protein localises to the cytoplasm. Its function is as follows. Facilitates the functional incorporation of the urease nickel metallocenter. This process requires GTP hydrolysis, probably effectuated by UreG. The sequence is that of Urease accessory protein UreG 1 from Methylorubrum populi (strain ATCC BAA-705 / NCIMB 13946 / BJ001) (Methylobacterium populi).